The following is an 874-amino-acid chain: Alanine--tRNA ligase (874 aa).

Zn(2+) is bound by residues H562, H566, C664, and H668.

This sequence belongs to the class-II aminoacyl-tRNA synthetase family. The cofactor is Zn(2+).

The protein localises to the cytoplasm. It carries out the reaction tRNA(Ala) + L-alanine + ATP = L-alanyl-tRNA(Ala) + AMP + diphosphate. Catalyzes the attachment of alanine to tRNA(Ala) in a two-step reaction: alanine is first activated by ATP to form Ala-AMP and then transferred to the acceptor end of tRNA(Ala). Also edits incorrectly charged Ser-tRNA(Ala) and Gly-tRNA(Ala) via its editing domain. In Shewanella sediminis (strain HAW-EB3), this protein is Alanine--tRNA ligase.